Here is a 144-residue protein sequence, read N- to C-terminus: Putative pre-16S rRNA nuclease (144 aa).

This sequence belongs to the YqgF nuclease family.

Its subcellular location is the cytoplasm. In terms of biological role, could be a nuclease involved in processing of the 5'-end of pre-16S rRNA. In Acaryochloris marina (strain MBIC 11017), this protein is Putative pre-16S rRNA nuclease.